We begin with the raw amino-acid sequence, 398 residues long: Decaprenyl-phosphate N-acetylglucosaminephosphotransferase (398 aa).

11 helical membrane-spanning segments follow: residues leucine 33–valine 53, glycine 79–leucine 99, tyrosine 105–isoleucine 125, valine 148–valine 168, isoleucine 175–leucine 195, leucine 198–leucine 218, valine 225–leucine 245, glycine 260–serine 280, proline 295–valine 315, valine 347–phenylalanine 367, and threonine 372–leucine 392.

It belongs to the glycosyltransferase 4 family. WecA subfamily. It depends on Mg(2+) as a cofactor. Mn(2+) is required as a cofactor.

The protein resides in the cell membrane. The enzyme catalyses trans,octa-cis-decaprenyl phosphate + UDP-N-acetyl-alpha-D-glucosamine = N-acetyl-alpha-D-glucosaminyl-1-diphospho-trans,octa-cis-decaprenol + UMP. It functions in the pathway cell wall biogenesis; cell wall polysaccharide biosynthesis. Functionally, involved in the biosynthesis of the disaccharide D-N-acetylglucosamine-L-rhamnose which plays an important role in the mycobacterial cell wall as a linker connecting arabinogalactan and peptidoglycan via a phosphodiester linkage. Catalyzes the transfer of the N-acetylglucosamine-1-phosphate (GlcNAc-1P) moiety from UDP-GlcNAc onto the carrier lipid decaprenyl phosphate (C50-P), yielding GlcNAc-pyrophosphoryl-decaprenyl (GlcNAc-PP-C50). In Mycobacterium leprae (strain TN), this protein is Decaprenyl-phosphate N-acetylglucosaminephosphotransferase (wecA).